A 132-amino-acid chain; its full sequence is Small ribosomal subunit protein uS8 (132 aa).

Belongs to the universal ribosomal protein uS8 family. In terms of assembly, part of the 30S ribosomal subunit. Contacts proteins S5 and S12.

Functionally, one of the primary rRNA binding proteins, it binds directly to 16S rRNA central domain where it helps coordinate assembly of the platform of the 30S subunit. This is Small ribosomal subunit protein uS8 from Corynebacterium diphtheriae (strain ATCC 700971 / NCTC 13129 / Biotype gravis).